The sequence spans 742 residues: Collectin-12 (742 aa).

Residues 1–37 are Cytoplasmic-facing; that stretch reads MKDDFAEEEEVQSFGYKRFGIQEGTQCTKCKNNWALK. Residues 38-58 form a helical; Signal-anchor for type II membrane protein membrane-spanning segment; sequence FSIILLYILCVLLTITIAILG. Residues 59–742 lie on the Extracellular side of the membrane; the sequence is YKVVEKMDNV…DMDKEQIFGV (684 aa). Coiled coils occupy residues 71-101 and 271-334; these read GLETSHRRYTEKLTEVESDLKKLDDQAGQKA and NNSA…QLEE. Residues 439–605 are disordered; it reads TILQGPPGPR…SEPTSVPEAN (167 aa). Collagen-like domains are found at residues 467–526 and 527–586; these read GQKG…SGDP and GPPG…PGPP. The span at 475–492 shows a compositional bias: pro residues; the sequence is PGPPGPAGEKGPPGPIGP. Low complexity-rich tracts occupy residues 502 to 522 and 532 to 556; these read RGSPGSKGQRGSPGKTGLPGP and QGKDGPQGPQGPPGFQGLQGTVGEP. A compositionally biased stretch (pro residues) spans 571 to 589; sequence PGLPGPKGPPGPPGPPGPG. 3 cysteine pairs are disulfide-bonded: cysteine 607-cysteine 618, cysteine 635-cysteine 730, and cysteine 708-cysteine 722. Residues 614–731 enclose the C-type lectin domain; it reads YTEKCYYFSI…CEDVNNFICE (118 aa). Isoleucine 644, asparagine 646, glutamate 650, aspartate 670, and glutamate 674 together coordinate Ca(2+). Residues lysine 691, glutamine 694, and aspartate 696 each coordinate a carbohydrate. Positions 694, 696, 697, 706, 707, 718, 719, and 731 each coordinate Ca(2+). Glutamate 706 contributes to the a carbohydrate binding site. Asparagine 718 and aspartate 719 together coordinate a carbohydrate.

In terms of tissue distribution, widely expressed.

The protein localises to the membrane. Functionally, scavenger receptor that displays several functions associated with host defense. Binds to carbohydrates. The chain is Collectin-12 (COLEC12) from Gallus gallus (Chicken).